The primary structure comprises 441 residues: ATP-dependent protease ATPase subunit HslU (441 aa).

Residues Ile-18, 60-65 (GVGKTE), Asp-254, Glu-319, and Arg-391 contribute to the ATP site.

The protein belongs to the ClpX chaperone family. HslU subfamily. A double ring-shaped homohexamer of HslV is capped on each side by a ring-shaped HslU homohexamer. The assembly of the HslU/HslV complex is dependent on binding of ATP.

It localises to the cytoplasm. In terms of biological role, ATPase subunit of a proteasome-like degradation complex; this subunit has chaperone activity. The binding of ATP and its subsequent hydrolysis by HslU are essential for unfolding of protein substrates subsequently hydrolyzed by HslV. HslU recognizes the N-terminal part of its protein substrates and unfolds these before they are guided to HslV for hydrolysis. This is ATP-dependent protease ATPase subunit HslU from Shewanella halifaxensis (strain HAW-EB4).